We begin with the raw amino-acid sequence, 306 residues long: Non-specific ribonucleoside hydrolase RihC (306 aa).

His235 is an active-site residue.

Belongs to the IUNH family. RihC subfamily.

Hydrolyzes both purine and pyrimidine ribonucleosides with a broad-substrate specificity. This is Non-specific ribonucleoside hydrolase RihC from Salmonella paratyphi B (strain ATCC BAA-1250 / SPB7).